Reading from the N-terminus, the 276-residue chain is SRR1-like protein (276 aa).

A Phosphoserine modification is found at serine 30. Phosphotyrosine is present on tyrosine 34.

This sequence belongs to the SRR1 family.

Functionally, possible regulator involved in a circadian clock input pathway. This is SRR1-like protein from Drosophila melanogaster (Fruit fly).